We begin with the raw amino-acid sequence, 61 residues long: Putative antitoxin VapB21 (61 aa).

This sequence belongs to the UPF0165 family.

Its function is as follows. Possibly the antitoxin component of a type II toxin-antitoxin (TA) system. Its cognate toxin is VapC21 (Potential). The protein is Putative antitoxin VapB21 (vapB21) of Archaeoglobus fulgidus (strain ATCC 49558 / DSM 4304 / JCM 9628 / NBRC 100126 / VC-16).